The primary structure comprises 95 residues: Small ribosomal subunit protein bS20 (95 aa).

Belongs to the bacterial ribosomal protein bS20 family.

Binds directly to 16S ribosomal RNA. The sequence is that of Small ribosomal subunit protein bS20 from Ehrlichia canis (strain Jake).